The primary structure comprises 150 residues: MSKKGPFNIRNAAADTFAMVVFCFITGMFIEILISGMTFEQSLASRTLSIPVNIAIAWPYGVFRDFMLRQGARISPSKFMKNIADLVAYVTFQSPAYAMILLVVGATPEQIITAVSSNVVVSCVMGVFYGYFLDACRKAFKVPGYYTPQA.

The next 4 helical transmembrane spans lie at 17-37 (FAMVVFCFITGMFIEILISGM), 48-68 (LSIPVNIAIAWPYGVFRDFML), 86-106 (LVAYVTFQSPAYAMILLVVGA), and 111-131 (IITAVSSNVVVSCVMGVFYGY).

The protein belongs to the AlaE exporter family.

The protein localises to the cell inner membrane. Its function is as follows. Exports L-alanine. The chain is L-alanine exporter AlaE from Aliivibrio fischeri (strain ATCC 700601 / ES114) (Vibrio fischeri).